A 67-amino-acid chain; its full sequence is Potassium channel toxin alpha-KTx 6.16 (67 aa).

The first 24 residues, 1-24 (MNLKLALVLLLTVINVGMLPGATS), serve as a signal peptide directing secretion. 4 cysteine pairs are disulfide-bonded: Cys34/Cys55, Cys40/Cys60, Cys44/Cys62, and Cys50/Cys65.

Belongs to the short scorpion toxin superfamily. Potassium channel inhibitor family. Alpha-KTx 06 subfamily. As to expression, expressed by the venom gland.

The protein localises to the secreted. Its function is as follows. Inhibits voltage-gated potassium channels. This Opisthacanthus cayaporum (South American scorpion) protein is Potassium channel toxin alpha-KTx 6.16.